Consider the following 94-residue polypeptide: Nucleoid-associated protein MYPE8070 (94 aa).

Belongs to the YbaB/EbfC family. Homodimer.

It localises to the cytoplasm. The protein resides in the nucleoid. Its function is as follows. Binds to DNA and alters its conformation. May be involved in regulation of gene expression, nucleoid organization and DNA protection. This is Nucleoid-associated protein MYPE8070 from Malacoplasma penetrans (strain HF-2) (Mycoplasma penetrans).